The chain runs to 88 residues: UPF0297 protein LACR_0137 (88 aa).

The protein belongs to the UPF0297 family.

In Lactococcus lactis subsp. cremoris (strain SK11), this protein is UPF0297 protein LACR_0137.